A 257-amino-acid polypeptide reads, in one-letter code: Hydroxypyruvate/pyruvate aldolase (257 aa).

His-48 (proton acceptor) is an active-site residue. Glu-152 and Asp-178 together coordinate a divalent metal cation.

The protein belongs to the HpcH/HpaI aldolase family. The cofactor is a divalent metal cation.

The catalysed reaction is D-glyceraldehyde + 3-hydroxypyruvate = 2-dehydro-D-gluconate. It catalyses the reaction D-glyceraldehyde + pyruvate = 2-dehydro-3-deoxy-L-galactonate. It carries out the reaction 2-dehydro-3-deoxy-D-gluconate = D-glyceraldehyde + pyruvate. Aldolase which can catalyze in vitro the aldolisation reaction between hydroxypyruvate (HPA) or pyruvate (PA) and D-glyceraldehyde (D-GA). The condensation of hydroxypyruvate and D-glyceraldehyde produces 2-dehydro-D-gluconate as the major product. The condensation of pyruvate and D-glyceraldehyde produces 2-dehydro-3-deoxy-L-galactonate as the major product and 2-dehydro-3-deoxy-D-gluconate. This chain is Hydroxypyruvate/pyruvate aldolase, found in Roseovarius nubinhibens (strain ATCC BAA-591 / DSM 15170 / ISM).